Consider the following 307-residue polypeptide: NAD kinase (307 aa).

Residue D80 is the Proton acceptor of the active site. NAD(+) is bound by residues 80 to 81 (DG), H85, 154 to 155 (ND), H165, H182, D184, 195 to 200 (TAYALS), and Q254.

The protein belongs to the NAD kinase family. A divalent metal cation is required as a cofactor.

It is found in the cytoplasm. It carries out the reaction NAD(+) + ATP = ADP + NADP(+) + H(+). In terms of biological role, involved in the regulation of the intracellular balance of NAD and NADP, and is a key enzyme in the biosynthesis of NADP. Catalyzes specifically the phosphorylation on 2'-hydroxyl of the adenosine moiety of NAD to yield NADP. The chain is NAD kinase from Acinetobacter baylyi (strain ATCC 33305 / BD413 / ADP1).